A 531-amino-acid chain; its full sequence is Galactose/methyl galactoside import permease protein MglC (531 aa).

10 helical membrane passes run 193 to 213, 239 to 259, 267 to 287, 300 to 320, 326 to 346, 376 to 396, 424 to 444, 461 to 481, 483 to 503, and 505 to 525; these read FFLA…CIVV, MFYA…LSIG, VVTG…GLGP, VMSL…AGFF, IHPF…LFFG, LVTF…AWFI, FGVT…GAFF, LDAI…IGKL, GAVV…FLGI, and TNLQ…LDSV.

Belongs to the binding-protein-dependent transport system permease family. AraH/RbsC subfamily. As to quaternary structure, the complex is composed of one ATP-binding protein (MglA), two transmembrane proteins (MglC) and a solute-binding protein (MglB).

It localises to the cell membrane. In terms of biological role, part of the ABC transporter complex MglABC involved in galactose/methyl galactoside import. Probably responsible for the translocation of the substrate across the membrane. The chain is Galactose/methyl galactoside import permease protein MglC (mglC) from Treponema pallidum (strain Nichols).